The sequence spans 264 residues: Hydroxyethylthiazole kinase (264 aa).

Residue M52 coordinates substrate. Positions 127 and 173 each coordinate ATP. G200 is a binding site for substrate.

Belongs to the Thz kinase family. Mg(2+) serves as cofactor.

The catalysed reaction is 5-(2-hydroxyethyl)-4-methylthiazole + ATP = 4-methyl-5-(2-phosphooxyethyl)-thiazole + ADP + H(+). Its pathway is cofactor biosynthesis; thiamine diphosphate biosynthesis; 4-methyl-5-(2-phosphoethyl)-thiazole from 5-(2-hydroxyethyl)-4-methylthiazole: step 1/1. Functionally, catalyzes the phosphorylation of the hydroxyl group of 4-methyl-5-beta-hydroxyethylthiazole (THZ). In Pectobacterium carotovorum subsp. carotovorum (strain PC1), this protein is Hydroxyethylthiazole kinase.